Consider the following 469-residue polypeptide: UDP-N-acetylmuramate--L-alanine ligase (469 aa).

Residue 119-125 (GTHGKTT) participates in ATP binding.

Belongs to the MurCDEF family.

It localises to the cytoplasm. The enzyme catalyses UDP-N-acetyl-alpha-D-muramate + L-alanine + ATP = UDP-N-acetyl-alpha-D-muramoyl-L-alanine + ADP + phosphate + H(+). It functions in the pathway cell wall biogenesis; peptidoglycan biosynthesis. Its function is as follows. Cell wall formation. The polypeptide is UDP-N-acetylmuramate--L-alanine ligase (Vesicomyosocius okutanii subsp. Calyptogena okutanii (strain HA)).